A 141-amino-acid chain; its full sequence is General odorant-binding protein 57b (141 aa).

The signal sequence occupies residues methionine 1–alanine 22. 3 disulfide bridges follow: cysteine 39/cysteine 77, cysteine 73/cysteine 120, and cysteine 111/cysteine 129.

It belongs to the PBP/GOBP family.

In terms of biological role, present in the aqueous fluid surrounding olfactory sensory dendrites and are thought to aid in the capture and transport of hydrophobic odorants into and through this fluid. This chain is General odorant-binding protein 57b, found in Drosophila melanogaster (Fruit fly).